The primary structure comprises 188 residues: METPPTPTTTTPPSLTTEGTMDDIQYLLHLEAMRRFQEDSRNVKRQVEEQVRIWLDAKCEYQRDFGRLARLLKCGALQAAVDAHRVSDVNQVDQAAKDIASLRSKLGSDLRPAILDSNDVKQCLEHLNTTHKPRLNLCRQQREFAQNQEALRSLRTAVDGLENGMEMGMIQAMDRLVEDLLPPRETNN.

Positions 141–163 (QREFAQNQEALRSLRTAVDGLEN) form a coiled coil.

In terms of assembly, component of the augmin complex composed of dgt2, dgt3, dgt4, dgt5, dgt6, msd1, msd5 and wac. The complex interacts directly or indirectly with microtubules and is required for centrosome-independent generation of spindle microtubules.

The protein resides in the cytoplasm. Its subcellular location is the cytoskeleton. It localises to the spindle. As part of the augmin complex, plays a role in centrosome-independent generation of spindle microtubules. The complex is required for mitotic spindle assembly through its involvement in localizing gamma-tubulin to spindle microtubules. The chain is Augmin complex subunit dgt4 from Drosophila melanogaster (Fruit fly).